Here is a 676-residue protein sequence, read N- to C-terminus: DNA ligase (676 aa).

Residues 1 to 10 (MTQAHHDDAG) show a composition bias toward basic and acidic residues. A disordered region spans residues 1-23 (MTQAHHDDAGARNALQGGLATDP). NAD(+)-binding positions include 52-56 (DAAFD) and 95-96 (SL). Catalysis depends on K148, which acts as the N6-AMP-lysine intermediate. NAD(+)-binding residues include R169, E203, and K330. Zn(2+) is bound by residues C420, C423, C436, and C441. Residues 593–676 (EAEGPLAGLT…DKLIAERRGG (84 aa)) form the BRCT domain.

The protein belongs to the NAD-dependent DNA ligase family. LigA subfamily. Mg(2+) is required as a cofactor. It depends on Mn(2+) as a cofactor.

It carries out the reaction NAD(+) + (deoxyribonucleotide)n-3'-hydroxyl + 5'-phospho-(deoxyribonucleotide)m = (deoxyribonucleotide)n+m + AMP + beta-nicotinamide D-nucleotide.. Functionally, DNA ligase that catalyzes the formation of phosphodiester linkages between 5'-phosphoryl and 3'-hydroxyl groups in double-stranded DNA using NAD as a coenzyme and as the energy source for the reaction. It is essential for DNA replication and repair of damaged DNA. The polypeptide is DNA ligase (Sorangium cellulosum (strain So ce56) (Polyangium cellulosum (strain So ce56))).